Here is a 436-residue protein sequence, read N- to C-terminus: Voltage-gated potassium channel regulatory subunit KCNG3 (436 aa).

Topologically, residues 1–168 (MTFGRSGAAS…RTFEEPTSSL (168 aa)) are cytoplasmic. The chain crosses the membrane as a helical span at residues 169 to 190 (AAQILASVSVVFVIVSMVVLCA). At 191-220 (STLPDWRNAAADNRSLDDRSRYSAGPGREP) the chain is on the extracellular side. Residues 221–242 (SGIIEAICIGWFTAECIVRFIV) traverse the membrane as a helical segment. Topologically, residues 243–253 (SKNKCEFVKRP) are cytoplasmic. The helical transmembrane segment at 254-274 (LNIIDLLAITPYYISVLMTVF) threads the bilayer. Residues 275–284 (TGENSQLQRA) are Extracellular-facing. The helical; Voltage-sensor transmembrane segment at 285–305 (GVTLRVLRMMRIFWVIKLARH) threads the bilayer. Over 306–320 (FIGLQTLGLTLKRCY) the chain is Cytoplasmic. Residues 321–342 (REMVMLLVFICVAMAIFSALSQ) traverse the membrane as a helical segment. Residues 343–360 (LLEHGLDLETSNKDFTSI) are Extracellular-facing. The helical intramembrane region spans 361–372 (PAACWWVIISMT). Residues 373 to 378 (TVGYGD) carry the Selectivity filter motif. Residues 373-380 (TVGYGDMY) lie within the membrane without spanning it. Residues 381 to 387 (PITVPGR) lie on the Extracellular side of the membrane. Residues 388-416 (ILGGVCVVSGIVLLALPITFIYHSFVQCY) form a helical membrane-spanning segment. Topologically, residues 417-436 (HELKFRSARYSRSLSTEFLN) are cytoplasmic.

The protein belongs to the potassium channel family. G (TC 1.A.1.2) subfamily. Kv6.3/KCNG3 sub-subfamily. As to quaternary structure, heterotetramer with KCNB1. Does not form homomultimers. Expressed in the brain, liver, testis, small intestine, colon, thymus and adrenal gland.

The protein resides in the cell membrane. It localises to the cytoplasm. Regulatory subunit of the voltage-gated potassium (Kv) channel which, when coassembled with KCNB1, modulates the kinetics parameters of the heterotetrameric channel namely the inactivation and deactivation rate. Potassium channel subunit that does not form functional channels by itself. Reduces the deactivation rate. Moderately accelerates activation. The protein is Voltage-gated potassium channel regulatory subunit KCNG3 of Homo sapiens (Human).